The chain runs to 946 residues: C-1-tetrahydrofolate synthase, cytoplasmic (946 aa).

Residues 2-319 are methylenetetrahydrofolate dehydrogenase and cyclohydrolase; that stretch reads AGQVLDGKAC…PPLPLKLLTP (318 aa). Residues 51 to 55 and 98 to 100 contribute to the substrate site; these read YVRMK and VQL. Residue 169 to 171 participates in NADP(+) binding; the sequence is GRS. S176 is subject to Phosphoserine. Position 194 (S194) interacts with NADP(+). 277 to 281 serves as a coordination point for substrate; the sequence is PGGVG. T318 carries the phosphothreonine modification. Positions 320–946 are formyltetrahydrofolate synthetase; sequence VPSDIDISRA…DDDGEIDGLF (627 aa). S322 bears the Phosphoserine mark. 384–391 lines the ATP pocket; sequence TPLGEGKS.

The protein in the N-terminal section; belongs to the tetrahydrofolate dehydrogenase/cyclohydrolase family. In the C-terminal section; belongs to the formate--tetrahydrofolate ligase family. As to quaternary structure, homodimer.

The protein localises to the cytoplasm. The protein resides in the nucleus. The enzyme catalyses (6R)-5,10-methylene-5,6,7,8-tetrahydrofolate + NADP(+) = (6R)-5,10-methenyltetrahydrofolate + NADPH. The catalysed reaction is (6R)-5,10-methenyltetrahydrofolate + H2O = (6R)-10-formyltetrahydrofolate + H(+). It carries out the reaction (6S)-5,6,7,8-tetrahydrofolate + formate + ATP = (6R)-10-formyltetrahydrofolate + ADP + phosphate. Its pathway is one-carbon metabolism; tetrahydrofolate interconversion. Functionally, cytoplasmic isozyme of C-1-tetrahydrofolate synthase. The trifunctional enzyme catalyzes the interconversion of the one-carbon derivatives of tetrahydrofolate (THF) between different oxidation states by the enzymatic activities 10-formyltetrahydrofolate synthetase, 5,lO-methenyltetrahydrofolate cyclohydrolase, and 5,lO-methylenetetrahydrofolate dehydrogenase. Involved in the generation of one-carbon intermediates in the biosynthesis of the purine bases. The chain is C-1-tetrahydrofolate synthase, cytoplasmic (ADE3) from Saccharomyces cerevisiae (strain ATCC 204508 / S288c) (Baker's yeast).